We begin with the raw amino-acid sequence, 243 residues long: Carboxy-S-adenosyl-L-methionine synthase (243 aa).

S-adenosyl-L-methionine is bound by residues Tyr35, 68–70 (GCS), 92–93 (DN), and Arg199.

It belongs to the class I-like SAM-binding methyltransferase superfamily. Cx-SAM synthase family. Homodimer.

The catalysed reaction is prephenate + S-adenosyl-L-methionine = carboxy-S-adenosyl-L-methionine + 3-phenylpyruvate + H2O. In terms of biological role, catalyzes the conversion of S-adenosyl-L-methionine (SAM) to carboxy-S-adenosyl-L-methionine (Cx-SAM). The sequence is that of Carboxy-S-adenosyl-L-methionine synthase from Helicobacter pylori (strain ATCC 700392 / 26695) (Campylobacter pylori).